Consider the following 419-residue polypeptide: Equilibrative nucleotide transporter 5 (419 aa).

11 helical membrane-spanning segments follow: residues Met20 to Val40, Val56 to Glu76, Leu86 to Thr106, Gly108 to Ala128, Leu142 to Thr162, Ile186 to Phe206, Tyr265 to Tyr285, Gly292 to Gly312, Lys327 to Ala347, Trp354 to Leu374, and Leu393 to Ile413.

Belongs to the SLC29A/ENT transporter (TC 2.A.57) family.

Its subcellular location is the cell membrane. Functionally, may be involved in nucleoside transport. The polypeptide is Equilibrative nucleotide transporter 5 (ENT5) (Arabidopsis thaliana (Mouse-ear cress)).